A 216-amino-acid polypeptide reads, in one-letter code: Ribonuclease HII (216 aa).

The region spanning 27–216 (ASLAGVDEAG…VKEHVKNCEG (190 aa)) is the RNase H type-2 domain. Asp-33, Glu-34, and Asp-125 together coordinate a divalent metal cation.

Belongs to the RNase HII family. Requires Mn(2+) as cofactor. Mg(2+) serves as cofactor.

Its subcellular location is the cytoplasm. It catalyses the reaction Endonucleolytic cleavage to 5'-phosphomonoester.. Its function is as follows. Endonuclease that specifically degrades the RNA of RNA-DNA hybrids. The protein is Ribonuclease HII of Geotalea daltonii (strain DSM 22248 / JCM 15807 / FRC-32) (Geobacter daltonii).